The following is a 253-amino-acid chain: Tetraspanin-11 (253 aa).

Transmembrane regions (helical) follow at residues 19-39 (LLFI…AVGI), 63-83 (ILIF…GAII), and 93-113 (YFCL…LAHV). Residue Asn127 is glycosylated (N-linked (GlcNAc...) asparagine). Residues 220 to 240 (LLLMGAVGIGVACLQICGMVL) form a helical membrane-spanning segment.

Belongs to the tetraspanin (TM4SF) family.

Its subcellular location is the membrane. This is Tetraspanin-11 (Tspan11) from Mus musculus (Mouse).